Consider the following 310-residue polypeptide: Methionyl-tRNA formyltransferase (310 aa).

108-111 (SLLP) is a (6S)-5,6,7,8-tetrahydrofolate binding site.

The protein belongs to the Fmt family.

It carries out the reaction L-methionyl-tRNA(fMet) + (6R)-10-formyltetrahydrofolate = N-formyl-L-methionyl-tRNA(fMet) + (6S)-5,6,7,8-tetrahydrofolate + H(+). Functionally, attaches a formyl group to the free amino group of methionyl-tRNA(fMet). The formyl group appears to play a dual role in the initiator identity of N-formylmethionyl-tRNA by promoting its recognition by IF2 and preventing the misappropriation of this tRNA by the elongation apparatus. The protein is Methionyl-tRNA formyltransferase of Fusobacterium nucleatum subsp. nucleatum (strain ATCC 25586 / DSM 15643 / BCRC 10681 / CIP 101130 / JCM 8532 / KCTC 2640 / LMG 13131 / VPI 4355).